The following is a 381-amino-acid chain: Putative F-box/kelch-repeat protein At1g60570 (381 aa).

Residues 19–65 enclose the F-box domain; the sequence is PTLIPSLPEELILSILARVSRLSYRSLSLVCKRFHSLLTSGEIYRFR. Kelch repeat units follow at residues 126-169, 171-218, 220-266, and 269-314; these read KIYK…LIDG, IYVT…ERTN, LLVD…VIEN, and YDFF…DYGG.

The polypeptide is Putative F-box/kelch-repeat protein At1g60570 (Arabidopsis thaliana (Mouse-ear cress)).